The primary structure comprises 167 residues: Anaerobic nitrite reductase NSHB4 (167 aa).

The 151-residue stretch at 12 to 162 (RFTEEQEALV…LVAAIKEGMK (151 aa)) folds into the Globin domain. The Homodimerization signature appears at 45 to 49 (EVAPS). Heme b-binding residues include S55, H73, R103, T107, and H108. Positions 115 to 127 (DTHFEVARFALLE) match the Homodimerization motif.

This sequence belongs to the plant globin family. Homodimer. Heme b is required as a cofactor.

The protein resides in the cytoplasm. Its subcellular location is the nucleus. The catalysed reaction is Fe(III)-heme b-[protein] + nitric oxide + H2O = Fe(II)-heme b-[protein] + nitrite + 2 H(+). In terms of biological role, phytoglobin that reduces nitrite to nitric oxide under anoxic conditions (e.g. during flooding or in waterlogged soil). May not function as an oxygen storage or transport protein. Has an unusually high affinity for O(2) through an hexacoordinate heme iron because of a very low dissociation constant. The polypeptide is Anaerobic nitrite reductase NSHB4 (Oryza sativa subsp. indica (Rice)).